The following is a 754-amino-acid chain: Deadenylation-dependent mRNA-decapping factor pdc2 (754 aa).

The interval 499–754 (LESIWKALYI…MGLDARQLSA (256 aa)) is interaction with lsm1.

The protein belongs to the PAT1 family. As to quaternary structure, interacts with dcp2. Interacts with lsm1; via C-terminus.

It localises to the cytoplasm. Its subcellular location is the nucleus. It is found in the P-body. Functionally, activator of decapping that functions as a general and active mechanism of translational repression and required for P-body formation. Stabilizes the 3' terminus of mRNAs and modulates the rates of mRNA-decapping that occur following deadenylation. Might be required for promoting the formation or the stabilization of the preinitiation translation complexes. Necessary for accurate chromosome transmission during cell division. Together with lsm1, recruits the deadenylase ccr4 to P-bodies. The polypeptide is Deadenylation-dependent mRNA-decapping factor pdc2 (Schizosaccharomyces pombe (strain 972 / ATCC 24843) (Fission yeast)).